The chain runs to 264 residues: Anamorsin homolog 2 (264 aa).

Residues 1-142 (MAATAAALAV…KVSWSMGSSF (142 aa)) are N-terminal SAM-like domain. The linker stretch occupies residues 143–174 (PLKKATKGLPKIQIDDDSELIDEDSLLTEDDL). Residues Cys185, Cys194, Cys197, and Cys199 each contribute to the [2Fe-2S] cluster site. Residues 185–199 (CEVGATRKACKNCTC) are fe-S binding site A. [4Fe-4S] cluster-binding residues include Cys225, Cys228, Cys236, and Cys239. 2 consecutive short sequence motifs (cx2C motif) follow at residues 225–228 (CGNC) and 236–239 (CGTC). Residues 225–239 (CGNCGLGDAFRCGTC) are fe-S binding site B.

The protein belongs to the anamorsin family. In terms of assembly, monomer. Requires [2Fe-2S] cluster as cofactor. [4Fe-4S] cluster is required as a cofactor.

It is found in the cytoplasm. Its subcellular location is the mitochondrion intermembrane space. Component of the cytosolic iron-sulfur (Fe-S) protein assembly (CIA) machinery. Required for the maturation of extramitochondrial Fe-S proteins. Part of an electron transfer chain functioning in an early step of cytosolic Fe-S biogenesis, facilitating the de novo assembly of a [4Fe-4S] cluster on the cytosolic Fe-S scaffold complex. Electrons are transferred from NADPH via a FAD- and FMN-containing diflavin oxidoreductase. Together with the diflavin oxidoreductase, also required for the assembly of the diferric tyrosyl radical cofactor of ribonucleotide reductase (RNR), probably by providing electrons for reduction during radical cofactor maturation in the catalytic small subunit. The protein is Anamorsin homolog 2 of Oryza sativa subsp. japonica (Rice).